A 234-amino-acid chain; its full sequence is t-SNARE protein aex-4 (234 aa).

T-SNARE coiled-coil homology domains follow at residues 37–99 (AKLN…ITAM) and 170–232 (DAIE…VKKL).

Belongs to the SNAP-25 family. In terms of tissue distribution, expressed in intestinal cells.

The protein localises to the cell membrane. In terms of biological role, t-SNARE protein which regulates the secretion of aex-5 from intestinal cells. Involved in the defecation motor program, which is a coordinated series of three muscle contractions that occurs every 45 seconds. This Caenorhabditis elegans protein is t-SNARE protein aex-4.